The primary structure comprises 338 residues: DNA-directed RNA polymerase subunit alpha (338 aa).

Residues 1–226 form an alpha N-terminal domain (alpha-NTD) region; the sequence is MLIAQRPTLS…ELFGLARELN (226 aa). Positions 240–338 are alpha C-terminal domain (alpha-CTD); sequence DEQLAADLAL…DDAFVEDEQY (99 aa).

This sequence belongs to the RNA polymerase alpha chain family. Homodimer. The RNAP catalytic core consists of 2 alpha, 1 beta, 1 beta' and 1 omega subunit. When a sigma factor is associated with the core the holoenzyme is formed, which can initiate transcription.

It carries out the reaction RNA(n) + a ribonucleoside 5'-triphosphate = RNA(n+1) + diphosphate. In terms of biological role, DNA-dependent RNA polymerase catalyzes the transcription of DNA into RNA using the four ribonucleoside triphosphates as substrates. The protein is DNA-directed RNA polymerase subunit alpha of Nocardioides sp. (strain ATCC BAA-499 / JS614).